The sequence spans 309 residues: Sodium/potassium-transporting ATPase subunit beta-1 (309 aa).

At 1-45 (MSKNNGKGAKGEFEFPQPAKKQTFSEMIYNPQEGTFFGRTGKSWS) the chain is on the cytoplasmic side. Residues 46-66 (QLLLFYTIFYIVLAALFTICM) form a helical; Signal-anchor for type II membrane protein membrane-spanning segment. Residues 67–309 (QGLLSTISDT…GSVTFQILLD (243 aa)) lie on the Extracellular side of the membrane. Asn-133 carries an N-linked (GlcNAc...) asparagine glycan. 2 disulfide bridges follow: Cys-143-Cys-155 and Cys-165-Cys-179. The N-linked (GlcNAc...) asparagine glycan is linked to Asn-211. An intrachain disulfide couples Cys-225 to Cys-282.

The protein belongs to the X(+)/potassium ATPases subunit beta family. As to quaternary structure, the sodium/potassium-transporting ATPase is composed of a catalytic alpha subunit, an auxiliary non-catalytic beta subunit and an additional regulatory subunit. Interacts with nkain. As to expression, in embryos, it is expressed in the neurons of the CNS and PNS, in Garland cells and posterior spiracles. In adults, it is concentrated in the thorax and abdomen (muscle tissue, digestive system and Malpighian tubules) and weakly expressed in the head. Expression is diffuse in the nervous system.

The protein localises to the cell membrane. This is the non-catalytic component of the active enzyme, which catalyzes the hydrolysis of ATP coupled with the exchange of Na(+) and K(+) ions across the plasma membrane. The beta subunit regulates, through assembly of alpha/beta heterodimers, the number of sodium pumps transported to the plasma membrane. The polypeptide is Sodium/potassium-transporting ATPase subunit beta-1 (nrv1) (Drosophila melanogaster (Fruit fly)).